The following is a 383-amino-acid chain: Lipid-A-disaccharide synthase (383 aa).

The protein belongs to the LpxB family.

The enzyme catalyses 2-N,3-O-bis[(3R)-3-hydroxytetradecanoyl]-alpha-D-glucosaminyl 1-phosphate + UDP-2-N,3-O-bis[(3R)-3-hydroxytetradecanoyl]-alpha-D-glucosamine = lipid A disaccharide (E. coli) + UDP + H(+). It carries out the reaction a lipid X + a UDP-2-N,3-O-bis[(3R)-3-hydroxyacyl]-alpha-D-glucosamine = a lipid A disaccharide + UDP + H(+). Its pathway is glycolipid biosynthesis; lipid IV(A) biosynthesis; lipid IV(A) from (3R)-3-hydroxytetradecanoyl-[acyl-carrier-protein] and UDP-N-acetyl-alpha-D-glucosamine: step 5/6. Condensation of UDP-2,3-diacylglucosamine and 2,3-diacylglucosamine-1-phosphate to form lipid A disaccharide, a precursor of lipid A, a phosphorylated glycolipid that anchors the lipopolysaccharide to the outer membrane of the cell. This is Lipid-A-disaccharide synthase from Pectobacterium atrosepticum (strain SCRI 1043 / ATCC BAA-672) (Erwinia carotovora subsp. atroseptica).